We begin with the raw amino-acid sequence, 164 residues long: ATP synthase subunit b (164 aa).

A helical membrane pass occupies residues 10–32 (AVAFVLFFVLFGKKLWTPLAAAL).

Belongs to the ATPase B chain family. F-type ATPases have 2 components, F(1) - the catalytic core - and F(0) - the membrane proton channel. F(1) has five subunits: alpha(3), beta(3), gamma(1), delta(1), epsilon(1). F(0) has three main subunits: a(1), b(2) and c(10-14). The alpha and beta chains form an alternating ring which encloses part of the gamma chain. F(1) is attached to F(0) by a central stalk formed by the gamma and epsilon chains, while a peripheral stalk is formed by the delta and b chains.

The protein localises to the cell inner membrane. In terms of biological role, f(1)F(0) ATP synthase produces ATP from ADP in the presence of a proton or sodium gradient. F-type ATPases consist of two structural domains, F(1) containing the extramembraneous catalytic core and F(0) containing the membrane proton channel, linked together by a central stalk and a peripheral stalk. During catalysis, ATP synthesis in the catalytic domain of F(1) is coupled via a rotary mechanism of the central stalk subunits to proton translocation. Component of the F(0) channel, it forms part of the peripheral stalk, linking F(1) to F(0). The chain is ATP synthase subunit b from Gluconacetobacter diazotrophicus (strain ATCC 49037 / DSM 5601 / CCUG 37298 / CIP 103539 / LMG 7603 / PAl5).